We begin with the raw amino-acid sequence, 212 residues long: Calaxin (212 aa).

EF-hand domains follow at residues 65-100 (TDDM…FLRG), 101-136 (TLEE…SLLK), and 146-181 (GIKD…ETLL). Asp-78, Asp-80, Asp-82, Cys-84, Glu-89, Asp-114, Asn-116, Asp-118, Glu-125, Asp-159, Asp-161, Asp-163, Lys-165, and Asp-170 together coordinate Ca(2+).

In terms of assembly, component of the outer dynein arm-docking complex along with ODAD1, ODAD2, ODAD3 and ODAD4. In terms of tissue distribution, expressed in trachea multiciliated cells.

The protein localises to the cytoplasm. The protein resides in the cytoskeleton. Its subcellular location is the cilium axoneme. It localises to the cell projection. It is found in the cilium. The protein localises to the flagellum. Component of the outer dynein arm-docking complex (ODA-DC) that mediates outer dynein arms (ODA) binding onto the doublet microtubule. Seems to regulate the assembly of both ODAs and their axonemal docking complex onto ciliary microtubules. Regulates ciliary and flagellar motility and is required for cilia-driven determination of body laterality. The chain is Calaxin (CLXN) from Bos taurus (Bovine).